A 478-amino-acid polypeptide reads, in one-letter code: FERM domain-containing protein B (478 aa).

Disordered stretches follow at residues 19–39, 129–196, and 202–221; these read ELIP…TITS, EENS…GFLT, and KAQS…TIAS. 2 stretches are compositionally biased toward low complexity: residues 22–39 and 129–164; these read PTQS…TITS and EENS…ANDG. Residues 48 to 468 form the FERM domain; that stretch reads VLIRIYFIDD…DWSEEWESKE (421 aa). Over residues 165–179 the composition is skewed to gly residues; it reads SGSGSGSGSGSGSGS. Low complexity-rich tracts occupy residues 180-189 and 204-216; these read GTSTPNSPKG and QSPQ…SSLS.

This Dictyostelium discoideum (Social amoeba) protein is FERM domain-containing protein B (frmB).